Reading from the N-terminus, the 788-residue chain is Glucan 1,3-beta-glucosidase (788 aa).

The first 42 residues, 1–42 (MRFSSLLACLGAVGIQAAAIPFQRRVDNTTDSGSLDAAQAAA), serve as a signal peptide directing secretion. Asparagine 28, asparagine 233, asparagine 381, and asparagine 773 each carry an N-linked (GlcNAc...) asparagine glycan.

Belongs to the glycosyl hydrolase 55 family.

It carries out the reaction Successive hydrolysis of beta-D-glucose units from the non-reducing ends of (1-&gt;3)-beta-D-glucans, releasing alpha-glucose.. The polypeptide is Glucan 1,3-beta-glucosidase (EXG1) (Cochliobolus carbonum (Maize leaf spot fungus)).